A 126-amino-acid polypeptide reads, in one-letter code: Membrane-anchored ubiquitin-fold protein 2 (126 aa).

A Ubiquitin-like domain is found at 14–79; it reads VEVRFRLDDG…VLENNRTLAE (66 aa). At C123 the chain carries Cysteine methyl ester. C123 is lipidated: S-geranylgeranyl cysteine. Positions 124–126 are cleaved as a propeptide — removed in mature form; it reads TIL.

Its subcellular location is the cell membrane. Its function is as follows. May serve as docking site to facilitate the association of other proteins to the plasma membrane. This Oryza sativa subsp. japonica (Rice) protein is Membrane-anchored ubiquitin-fold protein 2 (MUB2).